We begin with the raw amino-acid sequence, 27 residues long: Toxin Bcg III 21.00 (27 aa).

The protein localises to the secreted. The protein resides in the nematocyst. In terms of biological role, possible voltage-gated potassium channel (Kv) blocker. The polypeptide is Toxin Bcg III 21.00 (Bunodosoma cangicum (Sea anemone)).